Consider the following 203-residue polypeptide: Leucyl/phenylalanyl-tRNA--protein transferase (203 aa).

This sequence belongs to the L/F-transferase family.

It localises to the cytoplasm. It carries out the reaction N-terminal L-lysyl-[protein] + L-leucyl-tRNA(Leu) = N-terminal L-leucyl-L-lysyl-[protein] + tRNA(Leu) + H(+). The enzyme catalyses N-terminal L-arginyl-[protein] + L-leucyl-tRNA(Leu) = N-terminal L-leucyl-L-arginyl-[protein] + tRNA(Leu) + H(+). It catalyses the reaction L-phenylalanyl-tRNA(Phe) + an N-terminal L-alpha-aminoacyl-[protein] = an N-terminal L-phenylalanyl-L-alpha-aminoacyl-[protein] + tRNA(Phe). Functions in the N-end rule pathway of protein degradation where it conjugates Leu, Phe and, less efficiently, Met from aminoacyl-tRNAs to the N-termini of proteins containing an N-terminal arginine or lysine. This is Leucyl/phenylalanyl-tRNA--protein transferase from Chelativorans sp. (strain BNC1).